A 234-amino-acid polypeptide reads, in one-letter code: MAKKVFKRLEKLFSKIQNDKAYGVEQGVEVVKSLASAKFDETVEVALRLGVDPRHADQMVRGAVVLPHGTGKKVRVAVFAKDIKQDEAKNAGADVVGGDDLAEEIKNGRIDFDMVIATPDMMAVVGKVGRILGPKGLMPNPKTGTVTMDIAKAVTNAKSGQVNFRVDKKGNVHAPIGKASFPEEKIKENMLELVKTINRLKPSSAKGKYIRNAALSLTMSPSVSLDAQELMDIK.

It belongs to the universal ribosomal protein uL1 family. As to quaternary structure, part of the 50S ribosomal subunit.

Functionally, binds directly to 23S rRNA. The L1 stalk is quite mobile in the ribosome, and is involved in E site tRNA release. Protein L1 is also a translational repressor protein, it controls the translation of the L11 operon by binding to its mRNA. The sequence is that of Large ribosomal subunit protein uL1 from Helicobacter pylori (strain G27).